Consider the following 184-residue polypeptide: Ribosome-recycling factor (184 aa).

It belongs to the RRF family.

The protein localises to the cytoplasm. Functionally, responsible for the release of ribosomes from messenger RNA at the termination of protein biosynthesis. May increase the efficiency of translation by recycling ribosomes from one round of translation to another. This Borreliella afzelii (strain PKo) (Borrelia afzelii) protein is Ribosome-recycling factor.